A 241-amino-acid polypeptide reads, in one-letter code: Tumor necrosis factor ligand superfamily member 13 (241 aa).

Positions 1–95 are excised as a propeptide; sequence MPASSPGHMG…KDGAKSRRRR (95 aa). Residues 107–241 form the THD domain; sequence SVLHLVPVNI…HGTFLGFVKL (135 aa). A glycan (N-linked (GlcNAc...) asparagine) is linked at N115. C187 and C202 are disulfide-bonded.

It belongs to the tumor necrosis factor family. Homotrimer. In terms of processing, the soluble form derives from the membrane form by proteolytic processing.

The protein resides in the secreted. In terms of biological role, cytokine that binds to TNFRSF13B/TACI and to TNFRSF17/BCMA. Plays a role in the regulation of tumor cell growth. May be involved in monocyte/macrophage-mediated immunological processes. The polypeptide is Tumor necrosis factor ligand superfamily member 13 (Tnfsf13) (Mus musculus (Mouse)).